Reading from the N-terminus, the 174-residue chain is Peroxisome assembly protein 22 (174 aa).

The chain crosses the membrane as a helical span at residues 9 to 27 (GYLAIIAAVSIGAAAYLWW).

It belongs to the peroxin-22 family.

It is found in the peroxisome membrane. Functionally, involved in peroxisome biogenesis. This is Peroxisome assembly protein 22 (PEX22) from Candida glabrata (strain ATCC 2001 / BCRC 20586 / JCM 3761 / NBRC 0622 / NRRL Y-65 / CBS 138) (Yeast).